Reading from the N-terminus, the 311-residue chain is Methionyl-tRNA formyltransferase (311 aa).

The interval 33-52 (RPDRPAGRGRHQRSSPVREL) is disordered. 110 to 113 (SLLP) lines the (6S)-5,6,7,8-tetrahydrofolate pocket.

It belongs to the Fmt family.

The enzyme catalyses L-methionyl-tRNA(fMet) + (6R)-10-formyltetrahydrofolate = N-formyl-L-methionyl-tRNA(fMet) + (6S)-5,6,7,8-tetrahydrofolate + H(+). Attaches a formyl group to the free amino group of methionyl-tRNA(fMet). The formyl group appears to play a dual role in the initiator identity of N-formylmethionyl-tRNA by promoting its recognition by IF2 and preventing the misappropriation of this tRNA by the elongation apparatus. The polypeptide is Methionyl-tRNA formyltransferase (Parafrankia sp. (strain EAN1pec)).